The following is a 251-amino-acid chain: 5'-nucleotidase SurE (251 aa).

A divalent metal cation-binding residues include Asp-9, Asp-10, Ser-40, and Asn-94.

Belongs to the SurE nucleotidase family. It depends on a divalent metal cation as a cofactor.

The protein localises to the cytoplasm. It catalyses the reaction a ribonucleoside 5'-phosphate + H2O = a ribonucleoside + phosphate. In terms of biological role, nucleotidase that shows phosphatase activity on nucleoside 5'-monophosphates. The polypeptide is 5'-nucleotidase SurE (Aquifex aeolicus (strain VF5)).